We begin with the raw amino-acid sequence, 92 residues long: Non-specific lipid-transfer protein 2 (92 aa).

Cystine bridges form between cysteine 4–cysteine 52, cysteine 14–cysteine 28, cysteine 29–cysteine 74, and cysteine 50–cysteine 88.

The protein belongs to the plant LTP family. In terms of tissue distribution, expressed in seeds and, at very low levels, in pulp of fruit (at protein level).

Functionally, plant non-specific lipid-transfer proteins transfer phospholipids as well as galactolipids across membranes. May play a role in wax or cutin deposition in the cell walls of expanding epidermal cells and certain secretory tissues. The chain is Non-specific lipid-transfer protein 2 from Actinidia deliciosa (Kiwi).